Here is a 443-residue protein sequence, read N- to C-terminus: Threonine/serine transporter TdcC (443 aa).

Helical transmembrane passes span 22–42, 44–64, 97–117, 140–160, 163–183, 207–227, 261–281, 311–331, 366–386, 389–409, and 423–443; these read TTWT…FFPI, AGFG…PIAF, GVVI…IYGV, FVAL…KDLM, VMSY…LSLI, ILIT…FSPI, MLMV…LSPA, FAIT…FKSF, LSMI…PNIL, IEAM…MYAI, and DNVF…YKLF.

It belongs to the amino acid/polyamine transporter 2 family. SdaC/TdcC subfamily.

Its subcellular location is the cell inner membrane. It carries out the reaction L-threonine(in) + H(+)(in) = L-threonine(out) + H(+)(out). It catalyses the reaction L-serine(in) + H(+)(in) = L-serine(out) + H(+)(out). Involved in the import of threonine and serine into the cell, with the concomitant import of a proton (symport system). The polypeptide is Threonine/serine transporter TdcC (Shigella flexneri serotype 5b (strain 8401)).